A 191-amino-acid chain; its full sequence is Glycerol-3-phosphate acyltransferase (191 aa).

Transmembrane regions (helical) follow at residues 7–27, 51–71, 80–100, 115–135, 139–159, and 161–181; these read ILVL…SYIG, KLAV…VMLA, FVFM…WLSF, FIEY…FVIF, SLSS…HYSA, and ESIT…ENIV.

Belongs to the PlsY family. In terms of assembly, probably interacts with PlsX.

The protein resides in the cell inner membrane. It catalyses the reaction an acyl phosphate + sn-glycerol 3-phosphate = a 1-acyl-sn-glycero-3-phosphate + phosphate. Its pathway is lipid metabolism; phospholipid metabolism. In terms of biological role, catalyzes the transfer of an acyl group from acyl-phosphate (acyl-PO(4)) to glycerol-3-phosphate (G3P) to form lysophosphatidic acid (LPA). This enzyme utilizes acyl-phosphate as fatty acyl donor, but not acyl-CoA or acyl-ACP. This is Glycerol-3-phosphate acyltransferase from Ehrlichia canis (strain Jake).